Here is a 750-residue protein sequence, read N- to C-terminus: Glycerophosphodiester phosphodiesterase GDPDL7 (750 aa).

The N-terminal stretch at 1-17 (MLRFIIFFSLFIHLCVA) is a signal peptide. GP-PDE domains follow at residues 41-339 (PAVV…SQSI) and 355-654 (ALVI…TRYL). N-linked (GlcNAc...) asparagine glycans are attached at residues Asn134, Asn304, Asn603, and Asn716.

Belongs to the glycerophosphoryl diester phosphodiesterase family. Expressed in flowers and siliques.

The enzyme catalyses a sn-glycero-3-phosphodiester + H2O = an alcohol + sn-glycerol 3-phosphate + H(+). The protein is Glycerophosphodiester phosphodiesterase GDPDL7 of Arabidopsis thaliana (Mouse-ear cress).